The chain runs to 359 residues: ATPase ASNA1 homolog (359 aa).

Position 23-30 (Lys23–Thr30) interacts with ATP. Asp63 is a catalytic residue. The ATP site is built by Glu252 and Asn279. Residues Cys291 and Cys294 each contribute to the Zn(2+) site.

The protein belongs to the arsA ATPase family. Homodimer.

It is found in the cytoplasm. The protein resides in the endoplasmic reticulum. In terms of biological role, ATPase required for the post-translational delivery of tail-anchored (TA) proteins to the endoplasmic reticulum. Recognizes and selectively binds the transmembrane domain of TA proteins in the cytosol. This complex then targets to the endoplasmic reticulum by membrane-bound receptors, where the tail-anchored protein is released for insertion. This process is regulated by ATP binding and hydrolysis. ATP binding drives the homodimer towards the closed dimer state, facilitating recognition of newly synthesized TA membrane proteins. ATP hydrolysis is required for insertion. Subsequently, the homodimer reverts towards the open dimer state, lowering its affinity for the membrane-bound receptor, and returning it to the cytosol to initiate a new round of targeting. This Trypanosoma cruzi (strain CL Brener) protein is ATPase ASNA1 homolog.